Reading from the N-terminus, the 224-residue chain is MTRPRVKSYFIDYSLKKVMLDEFLANYFKDAGYAGMELYKTPTGYRVVIYAEYPGRIIGRGGSIIRKLMTIMQTHFGLENVNITVSPVPDPDLNARIVAFRIVRALEKEIPYRRVAMAMLRRVMEAGAVGAEIIISGKLRSERARYEKLKAGRIYKAGDMVDYVVDRAVGKALLKRGVYGVEVVIVRPHLKPPDYVEIKSVKPEELADLIPVEKEETNESISPQ.

Residues 20–89 (LDEFLANYFK…NVNITVSPVP (70 aa)) form the KH type-2 domain.

It belongs to the universal ribosomal protein uS3 family. In terms of assembly, part of the 30S ribosomal subunit.

Its function is as follows. Binds the lower part of the 30S subunit head. The chain is Small ribosomal subunit protein uS3 from Staphylothermus marinus (strain ATCC 43588 / DSM 3639 / JCM 9404 / F1).